A 386-amino-acid polypeptide reads, in one-letter code: Formate-dependent phosphoribosylglycinamide formyltransferase (386 aa).

Residues 10–11 (EL) and Glu70 contribute to the N(1)-(5-phospho-beta-D-ribosyl)glycinamide site. Residues Arg102, Lys143, 148–153 (SSGKGQ), 183–186 (EAFV), and Glu191 contribute to the ATP site. One can recognise an ATP-grasp domain in the interval 107 to 298 (DLAAKELGLK…EFELHLRAIL (192 aa)). Positions 256 and 268 each coordinate Mg(2+). N(1)-(5-phospho-beta-D-ribosyl)glycinamide is bound by residues Asp275, Lys346, and 353–354 (RR).

It belongs to the PurK/PurT family. In terms of assembly, homodimer.

It catalyses the reaction N(1)-(5-phospho-beta-D-ribosyl)glycinamide + formate + ATP = N(2)-formyl-N(1)-(5-phospho-beta-D-ribosyl)glycinamide + ADP + phosphate + H(+). The protein operates within purine metabolism; IMP biosynthesis via de novo pathway; N(2)-formyl-N(1)-(5-phospho-D-ribosyl)glycinamide from N(1)-(5-phospho-D-ribosyl)glycinamide (formate route): step 1/1. In terms of biological role, involved in the de novo purine biosynthesis. Catalyzes the transfer of formate to 5-phospho-ribosyl-glycinamide (GAR), producing 5-phospho-ribosyl-N-formylglycinamide (FGAR). Formate is provided by PurU via hydrolysis of 10-formyl-tetrahydrofolate. This is Formate-dependent phosphoribosylglycinamide formyltransferase from Flavobacterium psychrophilum (strain ATCC 49511 / DSM 21280 / CIP 103535 / JIP02/86).